The primary structure comprises 514 residues: MESQSKKSSALKTLSSLWNGSSSATSDPVTVLDRSRTHHHRGRSTSSKAQPFRLDDSVYSDQPPKDHISLARSITRPESASESKIYAPSARSSLSLEAVVGKKVSAKFAKYLSQTDDDWGVSNIKASKSLPRMARSTTPNSSSRSLFPQNGVDTTTSRQKLHSSGRFPLPAKLAHRSVEVEVAESNALVSRIKKFSRILDAPIVDLNALRTLAWNGIPSEHRPIVWKYLLGYLPCNASRREVTLKRKRDEYNAAKDSCFNTNTEPPPLDQTIWRQIVLDVPRTNPSILLYQNPLTQRMLERILYVWASRHPASGYVQGISDLVTPFIQVFLSEYIGDKDPMTYDIALLDETNRNDIEADAYWCLSKLLDGIQDNYIHAQPGIRRQVNNLRELTLRIDEPLVKHLQMEGVDFLQFSFRWMNCLLMRELSISNIIRMWDTYMAEGVQGFSEFHLYVCAAFLVKWSSELQKMEFQDILIFLQSIPTKDWSTKDIEILLSEAFLWKSLYSGAGAHLKR.

Disordered regions lie at residues 17 to 65 (LWNG…QPPK) and 130 to 164 (LPRM…LHSS). Composition is skewed to polar residues over residues 18–28 (WNGSSSATSDP) and 135–158 (RSTT…TTSR). The 228-residue stretch at 216 to 443 (GIPSEHRPIV…RMWDTYMAEG (228 aa)) folds into the Rab-GAP TBC domain.

It localises to the golgi apparatus. The protein resides in the golgi stack. It is found in the cytoplasm. The protein localises to the nucleus. Functionally, stimulates specifically the GTPase activity of ypt1. Functions on the Golgi as a negative regulator of ypt1. The polypeptide is GTPase-activating protein gyp1 (Schizosaccharomyces pombe (strain 972 / ATCC 24843) (Fission yeast)).